The following is a 292-amino-acid chain: 33 kDa chaperonin (292 aa).

2 disulfide bridges follow: C238/C240 and C271/C274.

It belongs to the HSP33 family. Under oxidizing conditions two disulfide bonds are formed involving the reactive cysteines. Under reducing conditions zinc is bound to the reactive cysteines and the protein is inactive.

It is found in the cytoplasm. Redox regulated molecular chaperone. Protects both thermally unfolding and oxidatively damaged proteins from irreversible aggregation. Plays an important role in the bacterial defense system toward oxidative stress. This is 33 kDa chaperonin from Alkaliphilus metalliredigens (strain QYMF).